Reading from the N-terminus, the 181-residue chain is Acireductone dioxygenase (181 aa).

Residues His97, His99, Glu103, and His141 each coordinate Fe(2+). Positions 97, 99, 103, and 141 each coordinate Ni(2+).

The protein belongs to the acireductone dioxygenase (ARD) family. Monomer. It depends on Fe(2+) as a cofactor. Ni(2+) serves as cofactor.

The enzyme catalyses 1,2-dihydroxy-5-(methylsulfanyl)pent-1-en-3-one + O2 = 3-(methylsulfanyl)propanoate + CO + formate + 2 H(+). It catalyses the reaction 1,2-dihydroxy-5-(methylsulfanyl)pent-1-en-3-one + O2 = 4-methylsulfanyl-2-oxobutanoate + formate + 2 H(+). Its pathway is amino-acid biosynthesis; L-methionine biosynthesis via salvage pathway; L-methionine from S-methyl-5-thio-alpha-D-ribose 1-phosphate: step 5/6. In terms of biological role, catalyzes 2 different reactions between oxygen and the acireductone 1,2-dihydroxy-3-keto-5-methylthiopentene (DHK-MTPene) depending upon the metal bound in the active site. Fe-containing acireductone dioxygenase (Fe-ARD) produces formate and 2-keto-4-methylthiobutyrate (KMTB), the alpha-ketoacid precursor of methionine in the methionine recycle pathway. Ni-containing acireductone dioxygenase (Ni-ARD) produces methylthiopropionate, carbon monoxide and formate, and does not lie on the methionine recycle pathway. This is Acireductone dioxygenase from Pseudomonas fluorescens (strain Pf0-1).